The primary structure comprises 225 residues: Large ribosomal subunit protein bL25 (225 aa).

The interval 197–225 is disordered; sequence PQREEQMEDTDTAAADEEGDKEEDADKQE. The span at 202–225 shows a compositional bias: acidic residues; the sequence is QMEDTDTAAADEEGDKEEDADKQE.

This sequence belongs to the bacterial ribosomal protein bL25 family. CTC subfamily. As to quaternary structure, part of the 50S ribosomal subunit; part of the 5S rRNA/L5/L18/L25 subcomplex. Contacts the 5S rRNA. Binds to the 5S rRNA independently of L5 and L18.

In terms of biological role, this is one of the proteins that binds to the 5S RNA in the ribosome where it forms part of the central protuberance. The sequence is that of Large ribosomal subunit protein bL25 from Dichelobacter nodosus (strain VCS1703A).